Consider the following 326-residue polypeptide: DNA-directed RNA polymerase subunit alpha (326 aa).

Positions 1–231 (MQTALLKPKI…DQLSVFAALE (231 aa)) are alpha N-terminal domain (alpha-NTD). Residues 247–326 (IDPILLRPVD…ENWPPAGLEK (80 aa)) form an alpha C-terminal domain (alpha-CTD) region.

Belongs to the RNA polymerase alpha chain family. Homodimer. The RNAP catalytic core consists of 2 alpha, 1 beta, 1 beta' and 1 omega subunit. When a sigma factor is associated with the core the holoenzyme is formed, which can initiate transcription.

It carries out the reaction RNA(n) + a ribonucleoside 5'-triphosphate = RNA(n+1) + diphosphate. Functionally, DNA-dependent RNA polymerase catalyzes the transcription of DNA into RNA using the four ribonucleoside triphosphates as substrates. The chain is DNA-directed RNA polymerase subunit alpha from Cupriavidus metallidurans (strain ATCC 43123 / DSM 2839 / NBRC 102507 / CH34) (Ralstonia metallidurans).